We begin with the raw amino-acid sequence, 197 residues long: Probable nicotinate-nucleotide adenylyltransferase (197 aa).

It belongs to the NadD family.

The catalysed reaction is nicotinate beta-D-ribonucleotide + ATP + H(+) = deamido-NAD(+) + diphosphate. It functions in the pathway cofactor biosynthesis; NAD(+) biosynthesis; deamido-NAD(+) from nicotinate D-ribonucleotide: step 1/1. Catalyzes the reversible adenylation of nicotinate mononucleotide (NaMN) to nicotinic acid adenine dinucleotide (NaAD). The polypeptide is Probable nicotinate-nucleotide adenylyltransferase (Bordetella parapertussis (strain 12822 / ATCC BAA-587 / NCTC 13253)).